The primary structure comprises 569 residues: MNAVMDSRGAWVSCFLILGLVFGATVKAETKFSYERLRLRVTHQTTGDEYFRFITLLRDYVSSGSFSNEIPLLRQSTIPVSDAQRFVLVELTNQGGDSITAAIDVTNLYVVAYQAGDQSYFLRDAPDGAERHLFTGTTRSSLPFTGSYTDLERYAGHRDQIPLGIEELIQSVSALRYPGGSTRAQARSIIILIQMISEAARFNPIFWRVRQDINSGESFLPDMYMLELETSWGQQSTQVQQSTDGVFNNPFRLAISTGNFVTLSNVRDVIASLAIMLFVCRDRPSSSEVRYWPLVIRPVLENSGAVDDVTCTASEPTVRIVGRDGLCVDVRDGKFHNGNPIQLSPCKSNTDPNQLWTIRRDGTIRSNGRCLTTYGYTAGVYVMIFDCNTAVREATLWQIWGNGTIINPRSNLVLGAASGSSGTTLTVQTQVYSLGQGWLAGNDTAPREVTIYGFRDLCMEANGASVWVETCGSSTENQNWALYGDGSIRPKQNQDQCLTCQGDSVATVINIVSCSAGSSGQRWVFTNEGTILNLNNGLVMDVAQSNPSLRRIIIYPATGNPNQMWLPVP.

A signal peptide spans 1 to 33 (MNAVMDSRGAWVSCFLILGLVFGATVKAETKFS). The active site involves Glu198. Disulfide bonds link Cys280/Cys311, Cys327/Cys346, and Cys370/Cys387. A propeptide spans 288 to 307 (EVRYWPLVIRPVLENSGAVD) (connecting peptide). The region spanning 314–441 (SEPTVRIVGR…YSLGQGWLAG (128 aa)) is the Ricin B-type lectin 1 domain. D-galactose is bound at residue 329-331 (DVR). N-linked (GlcNAc...) asparagine glycosylation is found at Asn402 and Asn442. The 124-residue stretch at 445–568 (APREVTIYGF…GNPNQMWLPV (124 aa)) folds into the Ricin B-type lectin 2 domain. Cystine bridges form between Cys458/Cys471 and Cys497/Cys514. 541-543 (DVA) is a binding site for D-galactose.

This sequence belongs to the ribosome-inactivating protein family. Type 2 RIP subfamily. Disulfide-linked dimer of A and B chains.

It catalyses the reaction Endohydrolysis of the N-glycosidic bond at one specific adenosine on the 28S rRNA.. In terms of biological role, the A chain is responsible for inhibiting protein synthesis through the catalytic inactivation of 60S ribosomal subunits by removing adenine from position 4,324 of 28S rRNA. The B chain binds to cell receptors and probably facilitates the entry into the cell of the A chain; B chains are also responsible for cell agglutination (lectin activity). Inhibits growth of the human tumor cell line Molt4. This chain is Beta-galactoside-specific lectin 3, found in Viscum album (European mistletoe).